Here is a 124-residue protein sequence, read N- to C-terminus: Aspartate 1-decarboxylase (124 aa).

Serine 25 (schiff-base intermediate with substrate; via pyruvic acid) is an active-site residue. The residue at position 25 (serine 25) is a Pyruvic acid (Ser). Residue threonine 57 participates in substrate binding. Tyrosine 58 (proton donor) is an active-site residue. 71–73 (GAA) serves as a coordination point for substrate.

The protein belongs to the PanD family. As to quaternary structure, heterooctamer of four alpha and four beta subunits. Pyruvate serves as cofactor. In terms of processing, is synthesized initially as an inactive proenzyme, which is activated by self-cleavage at a specific serine bond to produce a beta-subunit with a hydroxyl group at its C-terminus and an alpha-subunit with a pyruvoyl group at its N-terminus.

The protein localises to the cytoplasm. It catalyses the reaction L-aspartate + H(+) = beta-alanine + CO2. The protein operates within cofactor biosynthesis; (R)-pantothenate biosynthesis; beta-alanine from L-aspartate: step 1/1. Functionally, catalyzes the pyruvoyl-dependent decarboxylation of aspartate to produce beta-alanine. The polypeptide is Aspartate 1-decarboxylase (Bdellovibrio bacteriovorus (strain ATCC 15356 / DSM 50701 / NCIMB 9529 / HD100)).